Reading from the N-terminus, the 104-residue chain is Fluoride-specific ion channel FluC 2 (104 aa).

3 helical membrane passes run Ile-22–Val-42, Leu-48–Ala-68, and Met-82–Leu-102. Na(+) is bound by residues Gly-59 and Ser-62.

This sequence belongs to the fluoride channel Fluc/FEX (TC 1.A.43) family.

It is found in the cell membrane. It catalyses the reaction fluoride(in) = fluoride(out). With respect to regulation, na(+) is not transported, but it plays an essential structural role and its presence is essential for fluoride channel function. Functionally, fluoride-specific ion channel. Important for reducing fluoride concentration in the cell, thus reducing its toxicity. The sequence is that of Fluoride-specific ion channel FluC 2 from Corynebacterium diphtheriae (strain ATCC 700971 / NCTC 13129 / Biotype gravis).